The chain runs to 103 residues: Large ribosomal subunit protein uL24 (103 aa).

This sequence belongs to the universal ribosomal protein uL24 family. In terms of assembly, part of the 50S ribosomal subunit.

Functionally, one of two assembly initiator proteins, it binds directly to the 5'-end of the 23S rRNA, where it nucleates assembly of the 50S subunit. Its function is as follows. One of the proteins that surrounds the polypeptide exit tunnel on the outside of the subunit. The polypeptide is Large ribosomal subunit protein uL24 (Brucella abortus (strain S19)).